A 906-amino-acid polypeptide reads, in one-letter code: Protein translocase subunit SecA (906 aa).

ATP contacts are provided by residues glutamine 89, 107–111 (GEGKT), and aspartate 502. Residues 868–887 (VPPAQRDPADPRTWGKVSRN) are disordered. Residues cysteine 890, cysteine 892, cysteine 901, and histidine 902 each coordinate Zn(2+).

It belongs to the SecA family. As to quaternary structure, monomer and homodimer. Part of the essential Sec protein translocation apparatus which comprises SecA, SecYEG and auxiliary proteins SecDF-YajC and YidC. Requires Zn(2+) as cofactor.

Its subcellular location is the cell inner membrane. It is found in the cytoplasm. It carries out the reaction ATP + H2O + cellular proteinSide 1 = ADP + phosphate + cellular proteinSide 2.. Part of the Sec protein translocase complex. Interacts with the SecYEG preprotein conducting channel. Has a central role in coupling the hydrolysis of ATP to the transfer of proteins into and across the cell membrane, serving both as a receptor for the preprotein-SecB complex and as an ATP-driven molecular motor driving the stepwise translocation of polypeptide chains across the membrane. This is Protein translocase subunit SecA from Brucella abortus (strain S19).